The following is an 868-amino-acid chain: Translation initiation factor IF-2 (868 aa).

2 disordered regions span residues Leu-49–Leu-72 and Lys-92–Lys-276. Positions Lys-92–Leu-240 are enriched in basic and acidic residues. A tr-type G domain is found at Ser-368–Gln-537. Positions Gly-377–Thr-384 are G1. Gly-377–Thr-384 provides a ligand contact to GTP. The interval Gly-402–His-406 is G2. Positions Asp-423–Gly-426 are G3. GTP contacts are provided by residues Asp-423–His-427 and Asn-477–Asp-480. Positions Asn-477–Asp-480 are G4. Positions Ser-513–Lys-515 are G5.

It belongs to the TRAFAC class translation factor GTPase superfamily. Classic translation factor GTPase family. IF-2 subfamily.

Its subcellular location is the cytoplasm. In terms of biological role, one of the essential components for the initiation of protein synthesis. Protects formylmethionyl-tRNA from spontaneous hydrolysis and promotes its binding to the 30S ribosomal subunits. Also involved in the hydrolysis of GTP during the formation of the 70S ribosomal complex. This Alteromonas mediterranea (strain DSM 17117 / CIP 110805 / LMG 28347 / Deep ecotype) protein is Translation initiation factor IF-2.